A 902-amino-acid polypeptide reads, in one-letter code: Probable dipeptidyl-aminopeptidase B (902 aa).

Disordered stretches follow at residues 1-23 (MTRR…LSVD) and 53-72 (DAEA…KLGS). Residues 1 to 78 (MTRRRSTSGT…KLGSGSRTRQ (78 aa)) are Cytoplasmic-facing. Over residues 7–21 (TSGTSSRSSTDSGLS) the composition is skewed to low complexity. A helical; Signal-anchor for type II membrane protein membrane pass occupies residues 79–99 (IFWALVILCLGGWVLALVLFL). Residues 100–902 (THGRASSQTA…VKRSVPAFAH (803 aa)) are Vacuolar-facing. N-linked (GlcNAc...) asparagine glycosylation is found at Asn335 and Asn626. The active-site Charge relay system is Ser740. N-linked (GlcNAc...) asparagine glycans are attached at residues Asn794 and Asn799. Catalysis depends on charge relay system residues Asp817 and His850.

Belongs to the peptidase S9B family.

The protein resides in the vacuole membrane. It catalyses the reaction Release of an N-terminal dipeptide, Xaa-Yaa-|-Zaa-, from a polypeptide, preferentially when Yaa is Pro, provided Zaa is neither Pro nor hydroxyproline.. Its function is as follows. Type IV dipeptidyl-peptidase which removes N-terminal dipeptides sequentially from polypeptides having unsubstituted N-termini provided that the penultimate residue is proline. The protein is Probable dipeptidyl-aminopeptidase B (dapB) of Aspergillus oryzae (strain ATCC 42149 / RIB 40) (Yellow koji mold).